Consider the following 281-residue polypeptide: MFAQALHWLTTSKLRYALALPFLFFILYTKTKKSKEQELENYIFSLPREKLDQIRGKPDEVINVIDEYVEQGHFLMNIGKLKGKIISEKIQQVKPKVMIELGGYVGYSAILFGKQLTDPSAHYYSLEVNPKFAKIASKIIDLAGLSNKVTIIVGKATDSLVELRRSLPNVIPSFEYLDFVFIDHWKDLYVPDLRVMETLDLIGQGSIIAADNILRPGVPEYVKYVQGSLDYRKEYDSTVSNVNGPQFIGKWNIIYKSKTIKVDDGKREKDAVEITEYIEAK.

S-adenosyl-L-methionine is bound by residues Ile-78, Glu-100, Ser-108, Glu-127, Val-128, Ala-156, and Asp-183. Position 183 (Asp-183) interacts with Mg(2+). Residue Lys-186 coordinates substrate. Asp-211 and Asn-212 together coordinate Mg(2+). Residue Asn-212 coordinates substrate.

This sequence belongs to the class I-like SAM-binding methyltransferase superfamily. Cation-dependent O-methyltransferase family. Requires Mg(2+) as cofactor.

The protein localises to the vacuole. The enzyme catalyses a catechol + S-adenosyl-L-methionine = a guaiacol + S-adenosyl-L-homocysteine + H(+). In Schizosaccharomyces pombe (strain 972 / ATCC 24843) (Fission yeast), this protein is Probable catechol O-methyltransferase 2.